Consider the following 125-residue polypeptide: Apoptosis inhibitor Rv3655c (125 aa).

An N-terminal signal peptide occupies residues 1-33 (MEAALAIATLVLVLVLCLAGVTAVSMQVRCIDA).

In terms of assembly, interacts with human E3 ubiquitin-protein ligase RNF213.

The protein resides in the secreted. Its subcellular location is the host cytoplasm. Effector protein that participates in the suppression of macrophage apoptosis by blocking the extrinsic pathway. Interferes with caspase-8 activation and binds to the host E3 ubiquitin-protein ligase RNF213, whose fusion partners have anti-apoptotic function. The protein is Apoptosis inhibitor Rv3655c of Mycobacterium tuberculosis (strain ATCC 25618 / H37Rv).